Reading from the N-terminus, the 265-residue chain is Thymidine kinase 2, mitochondrial (265 aa).

A mitochondrion-targeting transit peptide spans methionine 1–arginine 33. The span at serine 21 to serine 31 shows a compositional bias: low complexity. Residues serine 21–arginine 45 are disordered. An ATP-binding site is contributed by glycine 57–threonine 65. The active-site Proton acceptor is the glutamate 133.

Belongs to the DCK/DGK family. As to quaternary structure, homodimer.

The protein localises to the mitochondrion. The enzyme catalyses thymidine + ATP = dTMP + ADP + H(+). It carries out the reaction 2'-deoxycytidine + ATP = dCMP + ADP + H(+). It catalyses the reaction 2'-deoxyuridine + ATP = dUMP + ADP + H(+). Its function is as follows. Phosphorylates thymidine, deoxycytidine, and deoxyuridine in the mitochondrial matrix. In non-replicating cells, where cytosolic dNTP synthesis is down-regulated, mtDNA synthesis depends solely on TK2 and DGUOK. This Macaca fascicularis (Crab-eating macaque) protein is Thymidine kinase 2, mitochondrial (TK2).